A 162-amino-acid chain; its full sequence is Phosphopantetheine adenylyltransferase (162 aa).

Ser-9 provides a ligand contact to substrate. Residues 9–10 and His-17 each bind ATP; that span reads SF. Substrate-binding residues include Lys-41, Thr-73, and Arg-87. ATP contacts are provided by residues 88 to 90, Glu-98, and 122 to 128; these read GLR and NQNISSS.

Belongs to the bacterial CoaD family. As to quaternary structure, homohexamer. The cofactor is Mg(2+).

Its subcellular location is the cytoplasm. The enzyme catalyses (R)-4'-phosphopantetheine + ATP + H(+) = 3'-dephospho-CoA + diphosphate. Its pathway is cofactor biosynthesis; coenzyme A biosynthesis; CoA from (R)-pantothenate: step 4/5. In terms of biological role, reversibly transfers an adenylyl group from ATP to 4'-phosphopantetheine, yielding dephospho-CoA (dPCoA) and pyrophosphate. This chain is Phosphopantetheine adenylyltransferase, found in Leuconostoc mesenteroides subsp. mesenteroides (strain ATCC 8293 / DSM 20343 / BCRC 11652 / CCM 1803 / JCM 6124 / NCDO 523 / NBRC 100496 / NCIMB 8023 / NCTC 12954 / NRRL B-1118 / 37Y).